The following is a 347-amino-acid chain: Uroporphyrinogen decarboxylase (347 aa).

Residues 23–27, Asp73, Tyr150, Thr205, and His323 each bind substrate; that span reads RQAGR.

Belongs to the uroporphyrinogen decarboxylase family. As to quaternary structure, homodimer.

The protein localises to the cytoplasm. The enzyme catalyses uroporphyrinogen III + 4 H(+) = coproporphyrinogen III + 4 CO2. Its pathway is porphyrin-containing compound metabolism; protoporphyrin-IX biosynthesis; coproporphyrinogen-III from 5-aminolevulinate: step 4/4. Its function is as follows. Catalyzes the decarboxylation of four acetate groups of uroporphyrinogen-III to yield coproporphyrinogen-III. The protein is Uroporphyrinogen decarboxylase of Ruthia magnifica subsp. Calyptogena magnifica.